A 724-amino-acid chain; its full sequence is Solute carrier organic anion transporter family member 4C1 (724 aa).

The disordered stretch occupies residues 1–80 (MQGSKGVENP…PPGSQLSELE (80 aa)). Over 1 to 101 (MQGSKGVENP…QCLQRCNNPK (101 aa)) the chain is Cytoplasmic. A phosphoserine mark is found at serine 15 and serine 16. Residue threonine 19 is modified to Phosphothreonine. Phosphoserine is present on residues serine 24, serine 26, and serine 28. The segment covering 25–46 (ASPSQVEVSAVASRNQNGGSQP) has biased composition (polar residues). The helical transmembrane segment at 102–122 (GFLLHYCLLALTQGIVVNGLV) threads the bilayer. The Extracellular portion of the chain corresponds to 123-141 (NISISTIEKRYEMKSSLTG). A helical transmembrane segment spans residues 142 to 162 (LISSSYDISFCVLSLFVSFFG). Residues 163–168 (ERGHKP) lie on the Cytoplasmic side of the membrane. The chain crosses the membrane as a helical span at residues 169–193 (RWLAFASFMIGLGALVFSLPHFFSG). Over 194 to 218 (RYELGTIFEDTCLTRNSTRCASSTS) the chain is Extracellular. Residues 219-249 (LLSNYFYVFVLGQLLLGTGGTPLYTLGTAFI) form a helical membrane-spanning segment. The Cytoplasmic segment spans residues 250 to 269 (DDSVPTHKSSLYIGIGYSMS). A helical transmembrane segment spans residues 270–290 (ILGPAIGYVLGGQLLTMYIDV). Residues 291-306 (AMGQSSDLTEDDPRWL) are Extracellular-facing. A helical transmembrane segment spans residues 307-331 (GAWWIGFLLAWLFAWSLIMPFSCFP). Residues 332–376 (KHLPGTAKIQAGKTSQTHQNNSTSFQHMDENFGKSIKDFPTAVKN) are Cytoplasmic-facing. A helical membrane pass occupies residues 377-398 (LMRNTVFICLVLSTTSEALVTT). Residues 399 to 418 (GFATFLPKFIENQFGLTSSF) lie on the Extracellular side of the membrane. The chain crosses the membrane as a helical span at residues 419–442 (AATLGGAVLIPGAALGQILGGVLV). The Cytoplasmic segment spans residues 443 to 446 (SKFK). Residues 447 to 470 (MKCKNTMKFALCTSGVALMLSFVF) traverse the membrane as a helical segment. The Extracellular segment spans residues 471 to 580 (IYAKCENGPF…KTQCSNLPIF (110 aa)). Positions 494–549 (GNLTAPCNANCNCLRSYYYPLCGSDGVQYFSPCFAGCLNSVSNRKPKAYYNCSCIE) constitute a Kazal-like domain. 3 disulfide bridges follow: cysteine 500–cysteine 530, cysteine 506–cysteine 526, and cysteine 515–cysteine 547. A helical membrane pass occupies residues 581-603 (LGIFFITVIFTFMAGTPITVSIL). The Cytoplasmic segment spans residues 604-612 (RCVNHRQRS). A helical membrane pass occupies residues 613 to 638 (LALGVQFMLLRLLGTIPGPIIFGVTI). The Extracellular portion of the chain corresponds to 639–672 (DSTCVLWDINECGTKGACWIYDNIRMAHMLVAIS). Residues 673–690 (VTCKVITIFFNGLAIVLY) form a helical membrane-spanning segment. Residues 691–724 (KPPPPGTEVSFQSQNVVVSTITVEEDLNKIENEG) lie on the Cytoplasmic side of the membrane.

This sequence belongs to the organo anion transporter (TC 2.A.60) family. As to expression, predominantly expressed in kidney and lung but also weakly expressed in brain. Localizes primarily in the proximal straight tubules, the S3 fraction of the nephron.

It is found in the basolateral cell membrane. Its subcellular location is the apical cell membrane. The enzyme catalyses estrone 3-sulfate(out) = estrone 3-sulfate(in). The catalysed reaction is L-thyroxine(out) = L-thyroxine(in). It carries out the reaction 3,3',5-triiodo-L-thyronine(out) = 3,3',5-triiodo-L-thyronine(in). It catalyses the reaction chenodeoxycholate(out) = chenodeoxycholate(in). The enzyme catalyses glycocholate(out) = glycocholate(in). The catalysed reaction is L-homoarginine(in) = L-homoarginine(out). It carries out the reaction L-arginine(in) = L-arginine(out). It catalyses the reaction N(omega),N(omega)-dimethyl-L-arginine(out) = N(omega),N(omega)-dimethyl-L-arginine(in). Its function is as follows. Mediates the transport of organic anions such as steroids (estrone 3-sulfate, chenodeoxycholate, glycocholate) and thyroid hormones (3,3',5-triiodo-L-thyronine (T3), L-thyroxine (T4)), in the kidney. Capable of transporting cAMP and pharmacological substances such as digoxin, ouabain and methotrexate. Transport is independent of sodium, chloride ion, and ATP. Transport activity is stimulated by an acidic extracellular environment due to increased substrate affinity to the transporter. The driving force for this transport activity is currently not known. The role of hydrogencarbonate (HCO3(-), bicarbonate) as the probable counteranion that exchanges for organic anions is still not well defined. Functions as an uptake transporter at the apical membrane, suggesting a role in renal reabsorption. Involved in the renal secretion of the uremic toxin ADMA (N(omega),N(omega)-dimethyl-L-arginine or asymmetrical dimethylarginine), which is associated to cardiovascular events and mortality, and the structurally related amino acids L-arginine and L-homoarginine (a cardioprotective biomarker). Can act bidirectionally, suggesting a dual protective role of this transport protein; exporting L-homoarginine after being synthesized in proximal tubule cells, and mediating uptake of ADMA from the blood into proximal tubule cells where it is degraded by the enzyme dimethylarginine dimethylaminohydrolase 1 (DDAH1). May be involved in sperm maturation by enabling directed movement of organic anions and compounds within or between cells. This ion-transporting process is important to maintain the strict epididymal homeostasis necessary for sperm maturation. May have a role in secretory functions since seminal vesicle epithelial cells are assumed to secrete proteins involved in decapacitation by modifying surface proteins to facilitate the acquisition of the ability to fertilize the egg. This is Solute carrier organic anion transporter family member 4C1 from Rattus norvegicus (Rat).